Here is a 1581-residue protein sequence, read N- to C-terminus: Calmodulin-regulated spectrin-associated protein 1 (1581 aa).

The Calponin-homology (CH) domain occupies 215 to 330 (ESPAHQKVRY…FIAELFWWFE (116 aa)). Residues Ser-216, Ser-370, Ser-374, and Ser-415 each carry the phosphoserine modification. Positions 351–399 (VLQQKSSRPPVPISNATKRSFLGSPAAMSPADQPPSTQPLAEGSHRYHL) are disordered. Residues 424–470 (RQKQQKVSQTEEIPDQRHRSNSLTRVDGQPRGAIGAWPDKKNRPVSQ) form a disordered region. Phosphothreonine is present on Thr-511. Phosphoserine occurs at positions 550, 553, 560, 572, and 586. The segment covering 603-617 (KQITTKEDERGEGRP) has biased composition (basic and acidic residues). Positions 603–649 (KQITTKEDERGEGRPRTIMAKRPSEGSQPMVRKKVSGGHGSRDLNRT) are disordered. Ser-626, Ser-718, Ser-724, Ser-734, and Ser-736 each carry phosphoserine. Positions 765-785 (ESAKLQEDMKVKEHEDKDDAS) are enriched in basic and acidic residues. 2 disordered regions span residues 765–803 (ESAKLQEDMKVKEHEDKDDASGRSSPCLSTTSQLSSMSM) and 821–866 (LNSC…SKDP). Low complexity-rich tracts occupy residues 792 to 803 (LSTTSQLSSMSM) and 826 to 837 (TKSSTSSSQKTT). A compositionally biased stretch (basic and acidic residues) spans 853-865 (QKREQSPGRHSKD). The sufficient for interaction with SPTBN1 stretch occupies residues 867 to 888 (ASLLASELVQLHMQLEEKRRAI). Coiled-coil stretches lie at residues 869–905 (LLASELVQLHMQLEEKRRAIEAQKKKMEALSARQRLK) and 1005–1037 (DVNECDLSIEKLNETISTLQQAILKISQQQEQL). The sufficient for interaction with calmodulin stretch occupies residues 899–918 (SARQRLKLGKAAFLHVVKKG). Disordered stretches follow at residues 1064–1143 (FVEP…ELPE), 1225–1251 (PDEDGEVVGHESSVELGGDSDQKPGVG), 1288–1315 (QLEAEVELKRDEARRKAEEDRLRKEEEK), and 1332–1428 (QALE…DWET). Phosphoserine is present on Ser-1069. Residues 1092-1103 (RPAELKVPKDRQ) show a composition bias toward basic and acidic residues. Residues 1104–1132 (QGCSRSKTPTPSVETLPQSRSLPPSTHPR) show a composition bias toward polar residues. The residue at position 1133 (Ser-1133) is a Phosphoserine. Residues 1225 to 1237 (PDEDGEVVGHESS) show a composition bias toward basic and acidic residues. The stretch at 1265 to 1336 (AKKRAAFLLK…RRKQQQALEE (72 aa)) forms a coiled coil. The span at 1342–1353 (PKSKPKKPRPKS) shows a compositional bias: basic residues. A compositionally biased stretch (polar residues) spans 1361–1372 (SDSGTKCSSTHN). Low complexity predominate over residues 1373–1390 (LSQTHSGSSLSLASAATT). Phosphoserine is present on residues Ser-1378 and Ser-1407. One can recognise a CKK domain in the interval 1443 to 1576 (GPKLFKEPSS…QPKRPTVPKK (134 aa)). Tyr-1516 carries the phosphotyrosine modification.

It belongs to the CAMSAP1 family. Interacts with spectrin via SPTBN1; the interaction is direct. Interacts with calmodulin; calcium-dependent it prevents interaction with spectrin. As to expression, expressed in the central nervous system.

It localises to the cytoplasm. The protein localises to the cytoskeleton. Key microtubule-organizing protein that specifically binds the minus-end of non-centrosomal microtubules and regulates their dynamics and organization. Specifically recognizes growing microtubule minus-ends and stabilizes microtubules. Acts on free microtubule minus-ends that are not capped by microtubule-nucleating proteins or other factors and protects microtubule minus-ends from depolymerization. In contrast to CAMSAP2 and CAMSAP3, tracks along the growing tips of minus-end microtubules without significantly affecting the polymerization rate: binds at the very tip of the microtubules minus-end and acts as a minus-end tracking protein (-TIP) that dissociates from microtubules after allowing tubulin incorporation. Through interaction with spectrin may regulate neurite outgrowth. In Mus musculus (Mouse), this protein is Calmodulin-regulated spectrin-associated protein 1 (Camsap1).